A 1453-amino-acid chain; its full sequence is NK-tumor recognition protein (1453 aa).

In terms of domain architecture, PPIase cyclophilin-type spans 10 to 175 (HFDIEINREP…ADVRVIDCGV (166 aa)). A disordered region spans residues 187-625 (KKRKKPTCSE…RWKPGQKPWK (439 aa)). Low complexity predominate over residues 195-213 (SEGSDSSSRSSSSSESSSE). Residues 221–240 (IRRRRHKRRPKVRHAKKRRK) show a composition bias toward basic residues. Over residues 259–286 (YSERSDVNEKRSVDSNTKREKPVVRPEE) the composition is skewed to basic and acidic residues. K323 participates in a covalent cross-link: Glycyl lysine isopeptide (Lys-Gly) (interchain with G-Cter in SUMO2). Residues 329–348 (SGRKIKGRGTIRYHTPPRSR) are compositionally biased toward basic residues. Phosphoserine is present on residues S379, S401, and S416. Residues 382–402 (KWSKGDKLSDPCSSRWDERSL) are compositionally biased toward basic and acidic residues. Polar residues predominate over residues 403–421 (SQRSRSWSYNGYYSDLSTA). Over residues 425–460 (DGHHKKHRKEKKFKHKKKAKKQKHCRRHRQTKKRRI) the composition is skewed to basic residues. The segment covering 514-531 (SSRDSYRSKSHSRSDSRG) has biased composition (basic and acidic residues). 2 stretches are compositionally biased toward low complexity: residues 532–546 (SSRSRAVSKSSSRSL) and 554–565 (SSRSGPRRTSIS). Residues K576 and K579 each participate in a glycyl lysine isopeptide (Lys-Gly) (interchain with G-Cter in SUMO2) cross-link. S611 is modified (phosphoserine). A Glycyl lysine isopeptide (Lys-Gly) (interchain with G-Cter in SUMO2) cross-link involves residue K637. Position 646 is a phosphoserine (S646). A compositionally biased stretch (polar residues) spans 651–661 (TNIKATVSSSS). The disordered stretch occupies residues 651 to 1453 (TNIKATVSSS…RSPSESSRYS (803 aa)). Residues K654 and K664 each participate in a glycyl lysine isopeptide (Lys-Gly) (interchain with G-Cter in SUMO2) cross-link. Composition is skewed to low complexity over residues 682–726 (RSSG…SSRS) and 736–749 (SQHSRSSSYTSVSS). Basic residues predominate over residues 755–772 (AMFRSNRKKSVTSHKRHR). Residues 773-789 (SNSEKTLHSKYVRGREK) are compositionally biased toward basic and acidic residues. Residues 799 to 809 (SRSSLDYSSDS) show a composition bias toward low complexity. Basic and acidic residues-rich tracts occupy residues 820-852 (PEKEKQGKVEALNDKQGKGREEGKPKPEWECPR) and 859-868 (KDHSRDDSVS). S880, S882, S884, and S900 each carry phosphoserine. Residues 887-902 (DVTKSRKSDPRRGSEK) show a composition bias toward basic and acidic residues. Residues 903–913 (EEGEASSDSES) show a composition bias toward acidic residues. Residues 948–958 (SSASESESSCS) are compositionally biased toward low complexity. Basic and acidic residues predominate over residues 966–982 (EPQKQKHSKDDLKGDHT). A compositionally biased stretch (basic residues) spans 983–1005 (KRAREKSKAKKDKKHKAPKRKQA). Over residues 1030 to 1045 (DPKEKRHVSEKCEAVK) the composition is skewed to basic and acidic residues. Phosphoserine occurs at positions 1139 and 1148. Residues 1170 to 1180 (QESSMSESKTL) show a composition bias toward polar residues. Residues 1189 to 1199 (SSTSVTSPVET) show a composition bias toward low complexity. Residue S1195 is modified to Phosphoserine. Glycyl lysine isopeptide (Lys-Gly) (interchain with G-Cter in SUMO2) cross-links involve residues K1208 and K1249. Residues 1303–1453 (RSPHRSRSKS…RSPSESSRYS (151 aa)) form an arg/Ser tandem repeat-rich region. Residues 1322-1346 (SVSYSHSRSRSRSSTSSYRSRSYSR) are compositionally biased toward low complexity. The segment covering 1369–1379 (HSHRTSSRSRS) has biased composition (basic residues). A compositionally biased stretch (low complexity) spans 1380-1401 (RSSSYDLHSRSRSYTYDSYYSR). The span at 1416–1426 (RGRSYNRRSRS) shows a compositional bias: basic residues.

The protein localises to the cell membrane. It catalyses the reaction [protein]-peptidylproline (omega=180) = [protein]-peptidylproline (omega=0). Inhibited by cyclosporin A (CsA). Functionally, PPIase that catalyzes the cis-trans isomerization of proline imidic peptide bonds in oligopeptides and may therefore assist protein folding. Component of a putative tumor-recognition complex involved in the function of NK cells. The polypeptide is NK-tumor recognition protein (Mus musculus (Mouse)).